Here is a 231-residue protein sequence, read N- to C-terminus: tRNA (guanine-N(7)-)-methyltransferase (231 aa).

S-adenosyl-L-methionine contacts are provided by Asp57, Glu82, Asp109, and Asp132. Residue Asp132 is part of the active site. Substrate-binding positions include Lys136, Asp168, and 205 to 208; that span reads TKFE. A disordered region spans residues 194–214; that stretch reads AFVPPPPPRPQTKFERRGLRK.

It belongs to the class I-like SAM-binding methyltransferase superfamily. TrmB family.

The catalysed reaction is guanosine(46) in tRNA + S-adenosyl-L-methionine = N(7)-methylguanosine(46) in tRNA + S-adenosyl-L-homocysteine. The protein operates within tRNA modification; N(7)-methylguanine-tRNA biosynthesis. In terms of biological role, catalyzes the formation of N(7)-methylguanine at position 46 (m7G46) in tRNA. The polypeptide is tRNA (guanine-N(7)-)-methyltransferase (Halorhodospira halophila (strain DSM 244 / SL1) (Ectothiorhodospira halophila (strain DSM 244 / SL1))).